The sequence spans 723 residues: F-box protein MAX2 homolog B (723 aa).

In terms of domain architecture, F-box spans 2–55 (AKTPIPFTTLNDLPDVILSNIIAAVSDTRSRNATALVCHKWLVLERSTRTSLTL).

Part of a putative SCF (SKP1/Cullin/F-box) ubiquitin ligase complex. Interacts with KAI2IA in the presence of (-)-germacrene D. As to expression, mainly expressed in fully expanded leaves, lateral roots, axillary and shoot apex, and, to a lower extent, in internodes and nodes.

The protein localises to the nucleus. It localises to the cytoplasm. Component of SCF(ASK-cullin-F-box) E3 ubiquitin ligase complexes, which may mediate the ubiquitination and subsequent proteasomal degradation of target proteins. Is necessary for responses to strigolactones and may be involved in the ubiquitin-mediated degradation of specific proteins that activate axillary growth. Targets probably SMAX1A to degradation upon the formation of an E3 SCF ubiquitin ligase complex (ASK-cullin-F-box) containing MAX2B and KAI2IA in response to (-)-germacrene D in the stigma. This Petunia hybrida (Petunia) protein is F-box protein MAX2 homolog B.